The chain runs to 155 residues: SsrA-binding protein (155 aa).

The protein belongs to the SmpB family.

It is found in the cytoplasm. Its function is as follows. Required for rescue of stalled ribosomes mediated by trans-translation. Binds to transfer-messenger RNA (tmRNA), required for stable association of tmRNA with ribosomes. tmRNA and SmpB together mimic tRNA shape, replacing the anticodon stem-loop with SmpB. tmRNA is encoded by the ssrA gene; the 2 termini fold to resemble tRNA(Ala) and it encodes a 'tag peptide', a short internal open reading frame. During trans-translation Ala-aminoacylated tmRNA acts like a tRNA, entering the A-site of stalled ribosomes, displacing the stalled mRNA. The ribosome then switches to translate the ORF on the tmRNA; the nascent peptide is terminated with the 'tag peptide' encoded by the tmRNA and targeted for degradation. The ribosome is freed to recommence translation, which seems to be the essential function of trans-translation. This Streptococcus suis (strain 98HAH33) protein is SsrA-binding protein.